We begin with the raw amino-acid sequence, 268 residues long: Thiazole synthase (268 aa).

Lys-111 serves as the catalytic Schiff-base intermediate with DXP. 1-deoxy-D-xylulose 5-phosphate-binding positions include Gly-172, 198–199 (AG), and 220–221 (NT).

The protein belongs to the ThiG family. Homotetramer. Forms heterodimers with either ThiH or ThiS.

Its subcellular location is the cytoplasm. The enzyme catalyses [ThiS sulfur-carrier protein]-C-terminal-Gly-aminoethanethioate + 2-iminoacetate + 1-deoxy-D-xylulose 5-phosphate = [ThiS sulfur-carrier protein]-C-terminal Gly-Gly + 2-[(2R,5Z)-2-carboxy-4-methylthiazol-5(2H)-ylidene]ethyl phosphate + 2 H2O + H(+). The protein operates within cofactor biosynthesis; thiamine diphosphate biosynthesis. In terms of biological role, catalyzes the rearrangement of 1-deoxy-D-xylulose 5-phosphate (DXP) to produce the thiazole phosphate moiety of thiamine. Sulfur is provided by the thiocarboxylate moiety of the carrier protein ThiS. In vitro, sulfur can be provided by H(2)S. The sequence is that of Thiazole synthase from Caulobacter sp. (strain K31).